The primary structure comprises 260 residues: Thrombin-like enzyme gloshedobin (260 aa).

The first 18 residues, 1–18 (MVLIRVQANLLILQLSYA), serve as a signal peptide directing secretion. Positions 19-24 (QKSSEL) are excised as a propeptide. One can recognise a Peptidase S1 domain in the interval 25–252 (IIGGDECNIN…TEWIQSIIAG (228 aa)). 6 disulfides stabilise this stretch: cysteine 31–cysteine 165, cysteine 52–cysteine 68, cysteine 100–cysteine 258, cysteine 144–cysteine 212, cysteine 176–cysteine 191, and cysteine 202–cysteine 227. Catalysis depends on charge relay system residues histidine 67 and aspartate 112. 2 N-linked (GlcNAc...) asparagine glycosylation sites follow: asparagine 123 and asparagine 124. Serine 206 acts as the Charge relay system in catalysis.

This sequence belongs to the peptidase S1 family. Snake venom subfamily. As to quaternary structure, monomer. Expressed by the venom gland.

The protein resides in the secreted. Its activity is regulated as follows. Completely inhibited by PMSF, and N-tosyl-Lphenylalanine chloromethyl ketone (TPCK) and poorly inhibited by benzamidine and derivates. Not inhibited by EDTA, heparin and hirudin. Thrombin-like snake venom serine protease. The recombinant form clots fibrinogen by cleaving fibrinogen Aalpha chain (FGA), and slowly Bbeta chain (FGB). Has amidolytic activities. This is Thrombin-like enzyme gloshedobin from Gloydius shedaoensis (Shedao island pit viper).